A 277-amino-acid polypeptide reads, in one-letter code: Putative protein-disulfide oxidoreductase RC0029 (277 aa).

An N-terminal signal peptide occupies residues Met-1 to Ala-22. The disordered stretch occupies residues Glu-34 to Gln-80. Polar residues predominate over residues Asn-39 to Gln-80. Residues Ala-76–Glu-265 enclose the Thioredoxin domain. An intrachain disulfide couples Cys-118 to Cys-121.

The protein belongs to the thioredoxin family. DsbA subfamily.

Its subcellular location is the periplasm. In terms of biological role, may be required for disulfide bond formation in some proteins. This is Putative protein-disulfide oxidoreductase RC0029 from Rickettsia conorii (strain ATCC VR-613 / Malish 7).